The primary structure comprises 1066 residues: Coiled-coil domain-containing protein 73 (1066 aa).

2 coiled-coil regions span residues 47–134 and 178–391; these read KAET…QVSQ and LVRE…KTEE. Disordered stretches follow at residues 568–600, 719–811, 854–883, 944–978, and 1003–1027; these read LDTR…SNPF, SENS…PKSG, LSPA…PEKT, KNIE…EERN, and VQQS…PGNN. 5 stretches are compositionally biased toward polar residues: residues 591-600, 742-781, 789-811, 857-869, and 948-964; these read NTDGSESNPF, RTNT…TSQA, PLTT…PKSG, ATPS…TSAR, and SDPT…SNWS. Residues 967–978 are compositionally biased toward basic and acidic residues; sequence LDPKGQPREERN. Positions 1003–1013 are enriched in polar residues; sequence VQQSHSQTVKV.

This is Coiled-coil domain-containing protein 73 (Ccdc73) from Mus musculus (Mouse).